A 630-amino-acid chain; its full sequence is Lysophospholipase 3 (630 aa).

The N-terminal stretch at 1–16 is a signal peptide; sequence MKALLSLLTAVAVATA. The PLA2c domain maps to 39–587; the sequence is SCPATRPSIR…KEYCWNGTVD (549 aa). Residues N56, N95, N164, N220, N283, N351, N390, N443, N456, N462, N493, N514, N542, N566, and N583 are each glycosylated (N-linked (GlcNAc...) asparagine). A lipid anchor (GPI-like-anchor amidated asparagine) is attached at N606. Positions 607–630 are cleaved as a propeptide — removed in mature form; it reads AAYTQGVTWLVGILAVGVAMGMTA.

Belongs to the lysophospholipase family. The GPI-like anchor contains a phosphoceramide lipid group.

The protein localises to the cell membrane. The catalysed reaction is a 1-acyl-sn-glycero-3-phosphocholine + H2O = sn-glycerol 3-phosphocholine + a fatty acid + H(+). In terms of biological role, catalyzes the release of fatty acids from lysophospholipids. The sequence is that of Lysophospholipase 3 (plb3) from Aspergillus fumigatus (strain CBS 144.89 / FGSC A1163 / CEA10) (Neosartorya fumigata).